We begin with the raw amino-acid sequence, 494 residues long: Transmembrane and coiled-coil domain-containing protein 6 (494 aa).

Residues 15 to 39 (GVEELRRRRREREAALRKARREQQL) adopt a coiled-coil conformation. 2 helical membrane-spanning segments follow: residues 338–358 (LVAA…ALLP) and 386–406 (PLLQ…TVLC).

It localises to the membrane. This chain is Transmembrane and coiled-coil domain-containing protein 6 (Tmco6), found in Mus musculus (Mouse).